The sequence spans 320 residues: Lipoyl synthase (320 aa).

Cys67, Cys72, Cys78, Cys93, Cys97, Cys100, and Ser307 together coordinate [4Fe-4S] cluster. Residues 79-296 (FNHGTATFMI…GVIAKEIGFT (218 aa)) enclose the Radical SAM core domain.

The protein belongs to the radical SAM superfamily. Lipoyl synthase family. [4Fe-4S] cluster serves as cofactor.

Its subcellular location is the cytoplasm. It catalyses the reaction [[Fe-S] cluster scaffold protein carrying a second [4Fe-4S](2+) cluster] + N(6)-octanoyl-L-lysyl-[protein] + 2 oxidized [2Fe-2S]-[ferredoxin] + 2 S-adenosyl-L-methionine + 4 H(+) = [[Fe-S] cluster scaffold protein] + N(6)-[(R)-dihydrolipoyl]-L-lysyl-[protein] + 4 Fe(3+) + 2 hydrogen sulfide + 2 5'-deoxyadenosine + 2 L-methionine + 2 reduced [2Fe-2S]-[ferredoxin]. It functions in the pathway protein modification; protein lipoylation via endogenous pathway; protein N(6)-(lipoyl)lysine from octanoyl-[acyl-carrier-protein]: step 2/2. Functionally, catalyzes the radical-mediated insertion of two sulfur atoms into the C-6 and C-8 positions of the octanoyl moiety bound to the lipoyl domains of lipoate-dependent enzymes, thereby converting the octanoylated domains into lipoylated derivatives. The polypeptide is Lipoyl synthase (Pseudoalteromonas atlantica (strain T6c / ATCC BAA-1087)).